A 420-amino-acid polypeptide reads, in one-letter code: Mannose-1-phosphate guanylyltransferase regulatory subunit alpha (420 aa).

The segment at Leu2–Ala251 is substrate-binding domain. Glu85 and Gln247 together coordinate GDP-alpha-D-mannose. Positions Leu273–Leu420 are hexapeptide repeat domain. Residues Thr356–Ile384 form a C-loop region.

This sequence belongs to the transferase hexapeptide repeat family. Component of the GMPPA-GMPPB mannose-1-phosphate guanylyltransferase complex composed of 4 GMPPA subunits and 8 GMPPB subunits; the complex is organized into three layers, a central layer made up of 2 GMPPA dimers sandwiched between two layers each made up of 2 GMPPB dimers.

Its subcellular location is the cytoplasm. Functionally, regulatory subunit of the GMPPA-GMPPB mannose-1-phosphate guanylyltransferase complex; reduces the catalytic activity of GMPPB when part of the complex. Mediates allosteric feedback inhibition of GMPPB catalytic activity upon binding GDP-alpha-D-mannose. Together with GMPPB regulates GDP-alpha-D-mannose levels. The sequence is that of Mannose-1-phosphate guanylyltransferase regulatory subunit alpha (Gmppa) from Rattus norvegicus (Rat).